The following is a 223-amino-acid chain: dITP/XTP pyrophosphatase (223 aa).

9 to 14 contacts substrate; sequence TTNQNK. Residue D71 is the Proton acceptor of the active site. Residue D71 coordinates Mg(2+). Residues S72, 152–155, K175, and 180–181 contribute to the substrate site; these read FGYD and HR. Positions 203-223 are disordered; the sequence is LSEEKPAKPDHSEFEGNDWSK.

The protein belongs to the HAM1 NTPase family. Homodimer. Mg(2+) is required as a cofactor.

It carries out the reaction XTP + H2O = XMP + diphosphate + H(+). The enzyme catalyses dITP + H2O = dIMP + diphosphate + H(+). The catalysed reaction is ITP + H2O = IMP + diphosphate + H(+). Its function is as follows. Pyrophosphatase that catalyzes the hydrolysis of nucleoside triphosphates to their monophosphate derivatives, with a high preference for the non-canonical purine nucleotides XTP (xanthosine triphosphate), dITP (deoxyinosine triphosphate) and ITP. Seems to function as a house-cleaning enzyme that removes non-canonical purine nucleotides from the nucleotide pool, thus preventing their incorporation into DNA/RNA and avoiding chromosomal lesions. The chain is dITP/XTP pyrophosphatase from Desulfotalea psychrophila (strain LSv54 / DSM 12343).